A 202-amino-acid chain; its full sequence is UMP-CMP kinase 3 (202 aa).

Residue 24–29 (GSGKGT) participates in ATP binding. The NMP stretch occupies residues 44–73 (SAGDLLRAEIKSGSENGTMIQNMIKEGKIV). A ribonucleoside 5'-phosphate-binding positions include R50, 71–73 (KIV), and 98–101 (GFPR). Residue N105 coordinates CMP. Residues 136-144 (GRNQGREDD) are LID. R137 is a binding site for ATP. The a ribonucleoside 5'-phosphate site is built by R141 and R152. K180 lines the ATP pocket.

As to quaternary structure, monomer. Mg(2+) is required as a cofactor.

Its subcellular location is the cytoplasm. The protein resides in the nucleus. The catalysed reaction is CMP + ATP = CDP + ADP. The enzyme catalyses dCMP + ATP = dCDP + ADP. It carries out the reaction UMP + ATP = UDP + ADP. In terms of biological role, catalyzes the phosphorylation of pyrimidine nucleoside monophosphates at the expense of ATP. Plays an important role in de novo pyrimidine nucleotide biosynthesis. Has preference for UMP and CMP as phosphate acceptors. Does not act on dCMP and dUMP. In Arabidopsis thaliana (Mouse-ear cress), this protein is UMP-CMP kinase 3 (UMK3).